Reading from the N-terminus, the 333-residue chain is Ribosomal RNA small subunit methyltransferase H (333 aa).

Residues 39–41 (GGY), Asp-57, Phe-84, Asp-101, and Gln-108 contribute to the S-adenosyl-L-methionine site.

Belongs to the methyltransferase superfamily. RsmH family.

The protein resides in the cytoplasm. The enzyme catalyses cytidine(1402) in 16S rRNA + S-adenosyl-L-methionine = N(4)-methylcytidine(1402) in 16S rRNA + S-adenosyl-L-homocysteine + H(+). Functionally, specifically methylates the N4 position of cytidine in position 1402 (C1402) of 16S rRNA. This Dinoroseobacter shibae (strain DSM 16493 / NCIMB 14021 / DFL 12) protein is Ribosomal RNA small subunit methyltransferase H.